Here is a 61-residue protein sequence, read N- to C-terminus: Large ribosomal subunit protein bL28 (61 aa).

This sequence belongs to the bacterial ribosomal protein bL28 family.

The chain is Large ribosomal subunit protein bL28 from Nautilia profundicola (strain ATCC BAA-1463 / DSM 18972 / AmH).